The chain runs to 335 residues: MAAPWVLPAPLSPAQLKRLEQHRYSSAGRSLLEPWLQPYWGWLVERLPPWLAPNAITLGGLLLNCLTALPLIASCPTATEQAPFWAYILGALGLFIYQSLDAIDGKQARRTNSSSPLGELFDHGCDSISTVFVVLGSCIAIRLGTNPDWLFFCCFVGLFMFYSAHWQTYVSGILRFGKVDVTEVQIAITMLLLVSAFCGTAVWDYKVHLVGLELKFFAVVGILCGTAVSCFNYFRIIFGGGVGKNGSTIAVAHMTKSEISLQDTAFIGPGLLFLDQYFNSFIDEYVVLWIALFISLFDMLRYATGVCLQIAAHLHIHVFRISSHQAPEQVQNHND.

2 consecutive transmembrane segments (helical) span residues 53 to 73 and 84 to 108; these read PNAITLGGLLLNCLTALPLIA and FWAYILGALGLFIYQSLDAIDGKQA. CDP-choline is bound at residue N54. D101 and D104 together coordinate Mg(2+). R109 provides a ligand contact to CDP-choline. 6 helical membrane passes run 116 to 140, 151 to 169, 181 to 197, 213 to 238, 267 to 276, and 284 to 313; these read PLGELFDHGCDSISTVFVVLGSCIA, FFCCFVGLFMFYSAHWQTY, VTEVQIAITMLLLVSAF, ELKFFAVVGILCGTAVSCFNYFRIIF, IGPGLLFLDQ, and EYVVLWIALFISLFDMLRYATGVCLQIAAH. Residue D122 participates in Mg(2+) binding. The active-site Proton acceptor is the H123. Position 126 (D126) interacts with Mg(2+).

The protein belongs to the CDP-alcohol phosphatidyltransferase class-I family. It depends on Mg(2+) as a cofactor. Mn(2+) serves as cofactor.

Its subcellular location is the golgi apparatus membrane. It catalyses the reaction CDP-choline + a 1,2-diacyl-sn-glycerol = a 1,2-diacyl-sn-glycero-3-phosphocholine + CMP + H(+). The catalysed reaction is 1-octadecanoyl-2-(5Z,8Z,11Z,14Z-eicosatetraenoyl)-sn-glycerol + CDP-choline = 1-octadecanoyl-2-(5Z,8Z,11Z,14Z-eicosatetraenoyl)-sn-glycero-3-phosphocholine + CMP + H(+). It carries out the reaction 1-hexadecanoyl-2-(9Z-octadecenoyl)-sn-glycerol + CDP-choline = 1-hexadecanoyl-2-(9Z-octadecenoyl)-sn-glycero-3-phosphocholine + CMP + H(+). The enzyme catalyses 1-hexadecanoyl-2-(4Z,7Z,10Z,13Z,16Z,19Z-docosahexaenoyl)-sn-glycerol + CDP-choline = 1-hexadecanoyl-2-(4Z,7Z,10Z,13Z,16Z,19Z-docosahexaenoyl)-sn-glycero-3-phosphocholine + CMP + H(+). It catalyses the reaction 1,2-dioctanoyl-sn-glycerol + CDP-choline = 1,2-dioctanoyl-sn-glycero-3-phosphocholine + CMP + H(+). Its pathway is phospholipid metabolism; phosphatidylcholine biosynthesis; phosphatidylcholine from phosphocholine: step 2/2. In terms of biological role, catalyzes the final step of de novo phosphatidylcholine (PC) synthesis, i.e. the transfer of choline phosphate from CDP-choline to the free hydroxyl of a diacylglycerol (DAG), producing a PC. It thereby plays a central role in the formation and maintenance of vesicular membranes. This is Cholinephosphotransferase 1 (CHPT1) from Gallus gallus (Chicken).